The sequence spans 173 residues: Translation initiation factor IF-3 (173 aa).

This sequence belongs to the IF-3 family. As to quaternary structure, monomer.

It localises to the cytoplasm. Functionally, IF-3 binds to the 30S ribosomal subunit and shifts the equilibrium between 70S ribosomes and their 50S and 30S subunits in favor of the free subunits, thus enhancing the availability of 30S subunits on which protein synthesis initiation begins. In Lactiplantibacillus plantarum (strain ATCC BAA-793 / NCIMB 8826 / WCFS1) (Lactobacillus plantarum), this protein is Translation initiation factor IF-3.